The chain runs to 165 residues: MEELVGLLRIRVKRGINLAQRDTLSSDPFVVITMGSQKLKTRVVENNCNPEWNEELTLALRHPDEPVNLIVYDKDTFTSHDKMGDAKIDIKPFLEVHKMGLQELPDGTEIKRVVPNRENCLAEASSIVSNNGKIVQNMILLLRNVECGEVEIQLEWIDIPGSRGL.

At Met1 the chain carries N-acetylmethionine. The C2 domain maps to 1–106 (MEELVGLLRI…HKMGLQELPD (106 aa)). Ca(2+)-binding residues include Arg21, Asp22, Asp27, Asp73, Lys74, Asp75, and Asp81.

The protein belongs to the plant CAR protein family. As to quaternary structure, binds to PYR/PYL/RCAR abscisic acid intracellular receptors in an ABA-independent manner, both at the plasma membrane and in the nucleus.

It is found in the cell membrane. It localises to the nucleus. Functionally, stimulates the GTPase/ATPase activities of Obg-like ATPases. Mediates the transient calcium-dependent interaction of PYR/PYL/RCAR abscisic acid (ABA) receptors with the plasma membrane and thus regulates ABA sensitivity. This Arabidopsis thaliana (Mouse-ear cress) protein is Protein C2-DOMAIN ABA-RELATED 7.